Here is a 526-residue protein sequence, read N- to C-terminus: ATP synthase subunit alpha (526 aa).

An ATP-binding site is contributed by 171–178 (GDRQTGKT).

It belongs to the ATPase alpha/beta chains family. F-type ATPases have 2 components, CF(1) - the catalytic core - and CF(0) - the membrane proton channel. CF(1) has five subunits: alpha(3), beta(3), gamma(1), delta(1), epsilon(1). CF(0) has four main subunits: a, b, b' and c.

It is found in the cell inner membrane. It carries out the reaction ATP + H2O + 4 H(+)(in) = ADP + phosphate + 5 H(+)(out). In terms of biological role, produces ATP from ADP in the presence of a proton gradient across the membrane. The alpha chain is a regulatory subunit. This Chlorobium limicola (strain DSM 245 / NBRC 103803 / 6330) protein is ATP synthase subunit alpha.